The primary structure comprises 92 residues: Small ribosomal subunit protein uS19 (92 aa).

It belongs to the universal ribosomal protein uS19 family.

Functionally, protein S19 forms a complex with S13 that binds strongly to the 16S ribosomal RNA. The polypeptide is Small ribosomal subunit protein uS19 (Bacillus mycoides (strain KBAB4) (Bacillus weihenstephanensis)).